The following is a 174-amino-acid chain: tRNA (cytidine(56)-2'-O)-methyltransferase (174 aa).

Residues L83, 108-112, and 126-133 each bind S-adenosyl-L-methionine; these read GAEKV and VGNQPHSE.

Belongs to the aTrm56 family. In terms of assembly, homodimer.

It localises to the cytoplasm. The catalysed reaction is cytidine(56) in tRNA + S-adenosyl-L-methionine = 2'-O-methylcytidine(56) in tRNA + S-adenosyl-L-homocysteine + H(+). Its function is as follows. Specifically catalyzes the AdoMet-dependent 2'-O-ribose methylation of cytidine at position 56 in tRNAs. The sequence is that of tRNA (cytidine(56)-2'-O)-methyltransferase from Methanothrix thermoacetophila (strain DSM 6194 / JCM 14653 / NBRC 101360 / PT) (Methanosaeta thermophila).